The chain runs to 89 residues: Small ribosomal subunit protein uS15 (89 aa).

Over residues 1-13 the composition is skewed to basic and acidic residues; it reads MTISKERKEEVIS. The tract at residues 1–24 is disordered; the sequence is MTISKERKEEVISEHGAAAGDTGS.

Belongs to the universal ribosomal protein uS15 family. In terms of assembly, part of the 30S ribosomal subunit. Forms a bridge to the 50S subunit in the 70S ribosome, contacting the 23S rRNA.

Its function is as follows. One of the primary rRNA binding proteins, it binds directly to 16S rRNA where it helps nucleate assembly of the platform of the 30S subunit by binding and bridging several RNA helices of the 16S rRNA. Functionally, forms an intersubunit bridge (bridge B4) with the 23S rRNA of the 50S subunit in the ribosome. The polypeptide is Small ribosomal subunit protein uS15 (Rhodopirellula baltica (strain DSM 10527 / NCIMB 13988 / SH1)).